The chain runs to 89 residues: Small ribosomal subunit protein uS15 (89 aa).

The protein belongs to the universal ribosomal protein uS15 family. As to quaternary structure, part of the 30S ribosomal subunit. Forms a bridge to the 50S subunit in the 70S ribosome, contacting the 23S rRNA.

One of the primary rRNA binding proteins, it binds directly to 16S rRNA where it helps nucleate assembly of the platform of the 30S subunit by binding and bridging several RNA helices of the 16S rRNA. Functionally, forms an intersubunit bridge (bridge B4) with the 23S rRNA of the 50S subunit in the ribosome. In Methylococcus capsulatus (strain ATCC 33009 / NCIMB 11132 / Bath), this protein is Small ribosomal subunit protein uS15.